The primary structure comprises 314 residues: Aromatic prenyltransferase (314 aa).

It belongs to the aromatic prenyltransferase family.

Prenyltransferase that attaches isoprenoid moieties to carbon atoms of aromatic substrates in an enzyme-catalyzed Friedel-Crafts reaction. The chain is Aromatic prenyltransferase from Arthroderma otae (strain ATCC MYA-4605 / CBS 113480) (Microsporum canis).